Here is a 166-residue protein sequence, read N- to C-terminus: Phosphopantetheine adenylyltransferase (166 aa).

S9 contributes to the substrate binding site. Residues 9–10 (SF) and H17 contribute to the ATP site. Residues K41, T74, and R88 each coordinate substrate. ATP contacts are provided by residues 89–91 (GLR), E99, and 124–130 (DSFISSS).

It belongs to the bacterial CoaD family. As to quaternary structure, homohexamer. Mg(2+) is required as a cofactor.

It is found in the cytoplasm. The catalysed reaction is (R)-4'-phosphopantetheine + ATP + H(+) = 3'-dephospho-CoA + diphosphate. Its pathway is cofactor biosynthesis; coenzyme A biosynthesis; CoA from (R)-pantothenate: step 4/5. In terms of biological role, reversibly transfers an adenylyl group from ATP to 4'-phosphopantetheine, yielding dephospho-CoA (dPCoA) and pyrophosphate. In Lactobacillus johnsonii (strain CNCM I-12250 / La1 / NCC 533), this protein is Phosphopantetheine adenylyltransferase.